The sequence spans 203 residues: IMP cyclohydrolase (203 aa).

It belongs to the archaeal IMP cyclohydrolase family.

The enzyme catalyses IMP + H2O = 5-formamido-1-(5-phospho-D-ribosyl)imidazole-4-carboxamide. The protein operates within purine metabolism; IMP biosynthesis via de novo pathway; IMP from 5-formamido-1-(5-phospho-D-ribosyl)imidazole-4-carboxamide: step 1/1. Catalyzes the cyclization of 5-formylamidoimidazole-4-carboxamide ribonucleotide to IMP. The sequence is that of IMP cyclohydrolase from Methanococcus aeolicus (strain ATCC BAA-1280 / DSM 17508 / OCM 812 / Nankai-3).